Consider the following 396-residue polypeptide: Acyl-[acyl-carrier-protein] desaturase, chloroplastic (396 aa).

A chloroplast-targeting transit peptide spans M1–M33. Fe cation contacts are provided by E138, E176, H179, E229, E262, and H265.

Belongs to the fatty acid desaturase type 2 family. Homodimer. The cofactor is Fe(2+).

The protein resides in the plastid. It is found in the chloroplast. It participates in lipid metabolism; fatty acid metabolism. Introduces a cis double bond in the acyl chain of an acyl-[acyl-carrier protein]. This Cucumis sativus (Cucumber) protein is Acyl-[acyl-carrier-protein] desaturase, chloroplastic.